Here is a 1240-residue protein sequence, read N- to C-terminus: RNA-directed RNA polymerase VP2 (1240 aa).

Positions 516 to 764 (LVANYINKHM…KLYALFGARI (249 aa)) constitute a RdRp catalytic domain.

Belongs to the reoviridae RNA-directed RNA polymerase family.

It localises to the virion. The enzyme catalyses RNA(n) + a ribonucleoside 5'-triphosphate = RNA(n+1) + diphosphate. Functionally, RNA-directed RNA polymerase that is involved in transcription and genome replication. Following infection, it catalyzes the synthesis of fully conservative plus strands. After core assembly, which consists in recruitment of one capped plus-strand for each genomic segments and polymerase complexes, the polymerase switches mode and catalyzes the synthesis of complementary minus-strands. This Oncorhynchus keta (Chum salmon) protein is RNA-directed RNA polymerase VP2 (S2).